Consider the following 37-residue polypeptide: Large ribosomal subunit protein bL36 (37 aa).

Belongs to the bacterial ribosomal protein bL36 family.

The polypeptide is Large ribosomal subunit protein bL36 (Legionella pneumophila subsp. pneumophila (strain Philadelphia 1 / ATCC 33152 / DSM 7513)).